The primary structure comprises 511 residues: Ribose import ATP-binding protein RbsA 3 (511 aa).

2 consecutive ABC transporter domains span residues 21–257 and 256–511; these read LEMR…VGRD and RDVE…TGNA. 53-60 provides a ligand contact to ATP; the sequence is GENGAGKS.

The protein belongs to the ABC transporter superfamily. Ribose importer (TC 3.A.1.2.1) family. In terms of assembly, the complex is composed of an ATP-binding protein (RbsA), two transmembrane proteins (RbsC) and a solute-binding protein (RbsB).

The protein localises to the cell inner membrane. It carries out the reaction D-ribose(out) + ATP + H2O = D-ribose(in) + ADP + phosphate + H(+). Part of the ABC transporter complex RbsABC involved in ribose import. Responsible for energy coupling to the transport system. This Rhizobium etli (strain ATCC 51251 / DSM 11541 / JCM 21823 / NBRC 15573 / CFN 42) protein is Ribose import ATP-binding protein RbsA 3.